The primary structure comprises 243 residues: Isoprenyl transferase 2 (243 aa).

D23 is an active-site residue. D23 provides a ligand contact to Mg(2+). Substrate contacts are provided by residues 24–27 (GNGR), W28, R36, H40, and 68–70 (STE). N71 acts as the Proton acceptor in catalysis. Residues W72, R74, R191, and 197–199 (RTS) contribute to the substrate site. E210 serves as a coordination point for Mg(2+).

The protein belongs to the UPP synthase family. As to quaternary structure, homodimer. Mg(2+) serves as cofactor.

Functionally, catalyzes the condensation of isopentenyl diphosphate (IPP) with allylic pyrophosphates generating different type of terpenoids. The protein is Isoprenyl transferase 2 of Corynebacterium glutamicum (strain ATCC 13032 / DSM 20300 / JCM 1318 / BCRC 11384 / CCUG 27702 / LMG 3730 / NBRC 12168 / NCIMB 10025 / NRRL B-2784 / 534).